Consider the following 111-residue polypeptide: uncharacterized protein (111 aa).

This is an uncharacterized protein from Methanocaldococcus jannaschii (strain ATCC 43067 / DSM 2661 / JAL-1 / JCM 10045 / NBRC 100440) (Methanococcus jannaschii).